A 154-amino-acid chain; its full sequence is Endoribonuclease YbeY (154 aa).

Positions 117, 121, and 127 each coordinate Zn(2+).

Belongs to the endoribonuclease YbeY family. Zn(2+) serves as cofactor.

It localises to the cytoplasm. Its function is as follows. Single strand-specific metallo-endoribonuclease involved in late-stage 70S ribosome quality control and in maturation of the 3' terminus of the 16S rRNA. This chain is Endoribonuclease YbeY, found in Mycoplasma pneumoniae (strain ATCC 29342 / M129 / Subtype 1) (Mycoplasmoides pneumoniae).